Here is a 221-residue protein sequence, read N- to C-terminus: Protein-L-isoaspartate O-methyltransferase (221 aa).

The active site involves serine 64.

It belongs to the methyltransferase superfamily. L-isoaspartyl/D-aspartyl protein methyltransferase family.

The protein resides in the cytoplasm. It carries out the reaction [protein]-L-isoaspartate + S-adenosyl-L-methionine = [protein]-L-isoaspartate alpha-methyl ester + S-adenosyl-L-homocysteine. Functionally, catalyzes the methyl esterification of L-isoaspartyl residues in peptides and proteins that result from spontaneous decomposition of normal L-aspartyl and L-asparaginyl residues. It plays a role in the repair and/or degradation of damaged proteins. The protein is Protein-L-isoaspartate O-methyltransferase of Cytophaga hutchinsonii (strain ATCC 33406 / DSM 1761 / CIP 103989 / NBRC 15051 / NCIMB 9469 / D465).